A 1209-amino-acid chain; its full sequence is Zinc finger protein 804A (1209 aa).

Residues 57–81 form a C2H2-type zinc finger; the sequence is FYCELCDKQYYKHQEFDNHINSYDH. The span at 380-394 shows a compositional bias: basic and acidic residues; it reads VKHNEASTTEVENKN. 2 disordered regions span residues 380–401 and 792–860; these read VKHN…TLAP and PEEF…MKPQ. The span at 807-819 shows a compositional bias: basic residues; the sequence is KPKKKRRRKRGRF. Composition is skewed to basic and acidic residues over residues 826–836 and 848–860; these read LELKENTDYPV and LISE…MKPQ.

The protein is Zinc finger protein 804A (ZNF804A) of Homo sapiens (Human).